The sequence spans 277 residues: Tryptophan synthase alpha chain (277 aa).

Residues Glu50 and Asp61 each act as proton acceptor in the active site.

This sequence belongs to the TrpA family. In terms of assembly, tetramer of two alpha and two beta chains.

The enzyme catalyses (1S,2R)-1-C-(indol-3-yl)glycerol 3-phosphate + L-serine = D-glyceraldehyde 3-phosphate + L-tryptophan + H2O. It participates in amino-acid biosynthesis; L-tryptophan biosynthesis; L-tryptophan from chorismate: step 5/5. The alpha subunit is responsible for the aldol cleavage of indoleglycerol phosphate to indole and glyceraldehyde 3-phosphate. This Beijerinckia indica subsp. indica (strain ATCC 9039 / DSM 1715 / NCIMB 8712) protein is Tryptophan synthase alpha chain.